A 337-amino-acid polypeptide reads, in one-letter code: Tetraacyldisaccharide 4'-kinase (337 aa).

55–62 (TAGGNGKT) is an ATP binding site.

Belongs to the LpxK family.

The enzyme catalyses a lipid A disaccharide + ATP = a lipid IVA + ADP + H(+). Its pathway is glycolipid biosynthesis; lipid IV(A) biosynthesis; lipid IV(A) from (3R)-3-hydroxytetradecanoyl-[acyl-carrier-protein] and UDP-N-acetyl-alpha-D-glucosamine: step 6/6. Its function is as follows. Transfers the gamma-phosphate of ATP to the 4'-position of a tetraacyldisaccharide 1-phosphate intermediate (termed DS-1-P) to form tetraacyldisaccharide 1,4'-bis-phosphate (lipid IVA). The polypeptide is Tetraacyldisaccharide 4'-kinase (Sodalis glossinidius (strain morsitans)).